A 355-amino-acid chain; its full sequence is Peptide chain release factor 1 (355 aa).

Q233 bears the N5-methylglutamine mark.

Belongs to the prokaryotic/mitochondrial release factor family. In terms of processing, methylated by PrmC. Methylation increases the termination efficiency of RF1.

It is found in the cytoplasm. Peptide chain release factor 1 directs the termination of translation in response to the peptide chain termination codons UAG and UAA. The polypeptide is Peptide chain release factor 1 (Bacillus cytotoxicus (strain DSM 22905 / CIP 110041 / 391-98 / NVH 391-98)).